Here is a 246-residue protein sequence, read N- to C-terminus: 3-deoxy-manno-octulosonate cytidylyltransferase (246 aa).

The protein belongs to the KdsB family.

It is found in the cytoplasm. The enzyme catalyses 3-deoxy-alpha-D-manno-oct-2-ulosonate + CTP = CMP-3-deoxy-beta-D-manno-octulosonate + diphosphate. Its pathway is nucleotide-sugar biosynthesis; CMP-3-deoxy-D-manno-octulosonate biosynthesis; CMP-3-deoxy-D-manno-octulosonate from 3-deoxy-D-manno-octulosonate and CTP: step 1/1. It functions in the pathway bacterial outer membrane biogenesis; lipopolysaccharide biosynthesis. In terms of biological role, activates KDO (a required 8-carbon sugar) for incorporation into bacterial lipopolysaccharide in Gram-negative bacteria. In Bradyrhizobium sp. (strain BTAi1 / ATCC BAA-1182), this protein is 3-deoxy-manno-octulosonate cytidylyltransferase.